A 447-amino-acid polypeptide reads, in one-letter code: Sporulation protein YpeB (447 aa).

It belongs to the YpeB family.

Its function is as follows. Required for spore cortex hydrolysis during germination. Appears to be required for either expression, localization, activation or function of SleB. The protein is Sporulation protein YpeB of Halalkalibacterium halodurans (strain ATCC BAA-125 / DSM 18197 / FERM 7344 / JCM 9153 / C-125) (Bacillus halodurans).